A 322-amino-acid chain; its full sequence is Heat-inducible transcription repressor HrcA (322 aa).

Belongs to the HrcA family.

Functionally, negative regulator of class I heat shock genes (grpE-dnaK-dnaJ and groELS operons). Prevents heat-shock induction of these operons. In Staphylococcus carnosus (strain TM300), this protein is Heat-inducible transcription repressor HrcA.